A 103-amino-acid chain; its full sequence is Small ribosomal subunit protein uS10 (103 aa).

Belongs to the universal ribosomal protein uS10 family. Part of the 30S ribosomal subunit.

In terms of biological role, involved in the binding of tRNA to the ribosomes. In Alcanivorax borkumensis (strain ATCC 700651 / DSM 11573 / NCIMB 13689 / SK2), this protein is Small ribosomal subunit protein uS10.